Reading from the N-terminus, the 269-residue chain is Formamidopyrimidine-DNA glycosylase (269 aa).

The active-site Schiff-base intermediate with DNA is P2. E3 (proton donor) is an active-site residue. The Proton donor; for beta-elimination activity role is filled by K57. H90, R109, and K150 together coordinate DNA. The FPG-type zinc-finger motif lies at 235–269; that stretch reads QVYGRKGEPCRVCGTPIAATKHAQRATFYCRHCQK. R259 (proton donor; for delta-elimination activity) is an active-site residue.

This sequence belongs to the FPG family. As to quaternary structure, monomer. It depends on Zn(2+) as a cofactor.

It carries out the reaction Hydrolysis of DNA containing ring-opened 7-methylguanine residues, releasing 2,6-diamino-4-hydroxy-5-(N-methyl)formamidopyrimidine.. The enzyme catalyses 2'-deoxyribonucleotide-(2'-deoxyribose 5'-phosphate)-2'-deoxyribonucleotide-DNA = a 3'-end 2'-deoxyribonucleotide-(2,3-dehydro-2,3-deoxyribose 5'-phosphate)-DNA + a 5'-end 5'-phospho-2'-deoxyribonucleoside-DNA + H(+). Functionally, involved in base excision repair of DNA damaged by oxidation or by mutagenic agents. Acts as a DNA glycosylase that recognizes and removes damaged bases. Has a preference for oxidized purines, such as 7,8-dihydro-8-oxoguanine (8-oxoG). Has AP (apurinic/apyrimidinic) lyase activity and introduces nicks in the DNA strand. Cleaves the DNA backbone by beta-delta elimination to generate a single-strand break at the site of the removed base with both 3'- and 5'-phosphates. This Salmonella paratyphi B (strain ATCC BAA-1250 / SPB7) protein is Formamidopyrimidine-DNA glycosylase.